Consider the following 276-residue polypeptide: NADPH-dependent 7-cyano-7-deazaguanine reductase (276 aa).

Substrate is bound at residue 83-85 (IES). Residue 85 to 86 (SK) participates in NADPH binding. The Thioimide intermediate role is filled by C184. Residue D191 is the Proton donor of the active site. Substrate is bound at residue 223–224 (HE). 252-253 (RG) contacts NADPH.

It belongs to the GTP cyclohydrolase I family. QueF type 2 subfamily. Homodimer.

It is found in the cytoplasm. The enzyme catalyses 7-aminomethyl-7-carbaguanine + 2 NADP(+) = 7-cyano-7-deazaguanine + 2 NADPH + 3 H(+). The protein operates within tRNA modification; tRNA-queuosine biosynthesis. Its function is as follows. Catalyzes the NADPH-dependent reduction of 7-cyano-7-deazaguanine (preQ0) to 7-aminomethyl-7-deazaguanine (preQ1). This is NADPH-dependent 7-cyano-7-deazaguanine reductase from Pseudomonas fluorescens (strain SBW25).